A 51-amino-acid chain; its full sequence is UPF0181 protein HAPS_0710 (51 aa).

The protein belongs to the UPF0181 family.

This Glaesserella parasuis serovar 5 (strain SH0165) (Haemophilus parasuis) protein is UPF0181 protein HAPS_0710.